Consider the following 150-residue polypeptide: MAKKVVGSLKLQIKAGQANPSPPVGPALGQRGINIMEFCKAFNAKTQEMEQGAPVPVVITYYADKSFTFETKTPPASFLLKKAAGLKPQGKRNRAKGSEKPGRQTAGTVTAKQVREIAEAKMKDLSANDVEAAMQIILGSARSIGIEVKG.

The segment at 83–111 is disordered; the sequence is AAGLKPQGKRNRAKGSEKPGRQTAGTVTA.

The protein belongs to the universal ribosomal protein uL11 family. Part of the ribosomal stalk of the 50S ribosomal subunit. Interacts with L10 and the large rRNA to form the base of the stalk. L10 forms an elongated spine to which L12 dimers bind in a sequential fashion forming a multimeric L10(L12)X complex. Post-translationally, one or more lysine residues are methylated.

Its function is as follows. Forms part of the ribosomal stalk which helps the ribosome interact with GTP-bound translation factors. The protein is Large ribosomal subunit protein uL11 of Paracoccus denitrificans (strain Pd 1222).